The following is a 464-amino-acid chain: Siroheme synthase (464 aa).

The precorrin-2 dehydrogenase /sirohydrochlorin ferrochelatase stretch occupies residues 1-203 (MKYLPLFHNL…GQGAEAERLL (203 aa)). NAD(+)-binding positions include 22-23 (EI) and 43-44 (PE). S128 carries the phosphoserine modification. The segment at 216 to 464 (GEVYLVGAGP…AWFEGAQGQI (249 aa)) is uroporphyrinogen-III C-methyltransferase. Position 225 (P225) interacts with S-adenosyl-L-methionine. The Proton acceptor role is filled by D248. Catalysis depends on K270, which acts as the Proton donor. S-adenosyl-L-methionine contacts are provided by residues 301–303 (GGD), I306, 331–332 (TA), M383, and G412.

This sequence in the N-terminal section; belongs to the precorrin-2 dehydrogenase / sirohydrochlorin ferrochelatase family. The protein in the C-terminal section; belongs to the precorrin methyltransferase family.

The enzyme catalyses uroporphyrinogen III + 2 S-adenosyl-L-methionine = precorrin-2 + 2 S-adenosyl-L-homocysteine + H(+). The catalysed reaction is precorrin-2 + NAD(+) = sirohydrochlorin + NADH + 2 H(+). It catalyses the reaction siroheme + 2 H(+) = sirohydrochlorin + Fe(2+). It functions in the pathway cofactor biosynthesis; adenosylcobalamin biosynthesis; precorrin-2 from uroporphyrinogen III: step 1/1. The protein operates within cofactor biosynthesis; adenosylcobalamin biosynthesis; sirohydrochlorin from precorrin-2: step 1/1. Its pathway is porphyrin-containing compound metabolism; siroheme biosynthesis; precorrin-2 from uroporphyrinogen III: step 1/1. It participates in porphyrin-containing compound metabolism; siroheme biosynthesis; siroheme from sirohydrochlorin: step 1/1. It functions in the pathway porphyrin-containing compound metabolism; siroheme biosynthesis; sirohydrochlorin from precorrin-2: step 1/1. Its function is as follows. Multifunctional enzyme that catalyzes the SAM-dependent methylations of uroporphyrinogen III at position C-2 and C-7 to form precorrin-2 via precorrin-1. Then it catalyzes the NAD-dependent ring dehydrogenation of precorrin-2 to yield sirohydrochlorin. Finally, it catalyzes the ferrochelation of sirohydrochlorin to yield siroheme. This chain is Siroheme synthase, found in Pseudomonas fluorescens (strain Pf0-1).